The following is a 420-amino-acid chain: Zinc finger and BTB domain-containing protein 42 (420 aa).

Residues 24-92 (CDCTVLVGDA…MYEGRLDLHS (69 aa)) form the BTB domain. 2 disordered regions span residues 174–204 (PPSWQVSEESSGALDLSLKPGPRPEQAHPPC) and 216–248 (QGAQPLVKAEQDSFSEQDSSSPQSADRSPPPVC). Over residues 227-241 (DSFSEQDSSSPQSAD) the composition is skewed to low complexity. 4 C2H2-type zinc fingers span residues 292–314 (CICPLCCKLFPSTHALQPHLSAH), 332–354 (PTCPLCSKTFSCTYTLKRHERTH), 360–382 (YTCVQCGKSFQYSHNLSRHAVVH), and 388–411 (HACRWCERRFTQSGDLYRHVRKFH).

It belongs to the krueppel C2H2-type zinc-finger protein family. ZBTB18 subfamily.

The protein resides in the cytoplasm. It localises to the nucleus. The protein localises to the nucleoplasm. Its function is as follows. Transcriptional repressor. Specifically binds DNA and probably acts by recruiting chromatin remodeling multiprotein complexes. The polypeptide is Zinc finger and BTB domain-containing protein 42 (Zbtb42) (Rattus norvegicus (Rat)).